The primary structure comprises 562 residues: Protoporphyrinogen oxidase 1, chloroplastic (562 aa).

Residues 1 to 48 (MSAMALSSTMALSLPQSSMSLSHCRHNRITILIPSSSLRRRGGSSIRC) constitute a chloroplast transit peptide. Residues 88-93 (GGGISG), 115-116 (EA), and 137-140 (GPNS) each bind FAD. The interval 274-302 (TLKTIQERKDNPKPPRDPRLPKPKGQTVG) is disordered. The span at 278–293 (IQERKDNPKPPRDPRL) shows a compositional bias: basic and acidic residues. Residues V323 and 536–538 (VAL) each bind FAD.

This sequence belongs to the protoporphyrinogen/coproporphyrinogen oxidase family. Protoporphyrinogen oxidase subfamily. It depends on FAD as a cofactor.

It is found in the plastid. The protein resides in the chloroplast thylakoid membrane. The protein localises to the chloroplast inner membrane. The enzyme catalyses protoporphyrinogen IX + 3 O2 = protoporphyrin IX + 3 H2O2. Its pathway is porphyrin-containing compound metabolism; protoporphyrin-IX biosynthesis; protoporphyrin-IX from protoporphyrinogen-IX: step 1/1. It participates in porphyrin-containing compound metabolism; chlorophyll biosynthesis. Functionally, catalyzes the 6-electron oxidation of protoporphyrinogen-IX to form protoporphyrin-IX. In Spinacia oleracea (Spinach), this protein is Protoporphyrinogen oxidase 1, chloroplastic.